Consider the following 201-residue polypeptide: 3-isopropylmalate dehydratase small subunit (201 aa).

The protein belongs to the LeuD family. LeuD type 1 subfamily. Heterodimer of LeuC and LeuD.

The catalysed reaction is (2R,3S)-3-isopropylmalate = (2S)-2-isopropylmalate. It participates in amino-acid biosynthesis; L-leucine biosynthesis; L-leucine from 3-methyl-2-oxobutanoate: step 2/4. Its function is as follows. Catalyzes the isomerization between 2-isopropylmalate and 3-isopropylmalate, via the formation of 2-isopropylmaleate. The chain is 3-isopropylmalate dehydratase small subunit from Shigella dysenteriae serotype 1 (strain Sd197).